The chain runs to 430 residues: Lipoyl synthase, mitochondrial (430 aa).

The N-terminal 37 residues, 1-37 (MATSAGKLRTLYSAHSSLSSLPPSARPTLQLATLRSY), are a transit peptide targeting the mitochondrion. A compositionally biased stretch (polar residues) spans 39–55 (TTTPHDSPIGNTSNTPP). The disordered stretch occupies residues 39–59 (TTTPHDSPIGNTSNTPPTVKR). The [4Fe-4S] cluster site is built by Cys-141, Cys-146, Cys-152, Cys-172, Cys-176, Cys-179, and Ser-387. The Radical SAM core domain maps to 155 to 376 (GSSKSAATAT…KERALEMGFL (222 aa)).

Belongs to the radical SAM superfamily. Lipoyl synthase family. [4Fe-4S] cluster is required as a cofactor.

It is found in the mitochondrion. The enzyme catalyses [[Fe-S] cluster scaffold protein carrying a second [4Fe-4S](2+) cluster] + N(6)-octanoyl-L-lysyl-[protein] + 2 oxidized [2Fe-2S]-[ferredoxin] + 2 S-adenosyl-L-methionine + 4 H(+) = [[Fe-S] cluster scaffold protein] + N(6)-[(R)-dihydrolipoyl]-L-lysyl-[protein] + 4 Fe(3+) + 2 hydrogen sulfide + 2 5'-deoxyadenosine + 2 L-methionine + 2 reduced [2Fe-2S]-[ferredoxin]. It participates in protein modification; protein lipoylation via endogenous pathway; protein N(6)-(lipoyl)lysine from octanoyl-[acyl-carrier-protein]: step 2/2. In terms of biological role, catalyzes the radical-mediated insertion of two sulfur atoms into the C-6 and C-8 positions of the octanoyl moiety bound to the lipoyl domains of lipoate-dependent enzymes, thereby converting the octanoylated domains into lipoylated derivatives. This is Lipoyl synthase, mitochondrial from Ajellomyces capsulatus (strain H143) (Darling's disease fungus).